The primary structure comprises 329 residues: Taste receptor type 2 member 102 (329 aa).

Topologically, residues 1-9 are extracellular; sequence MNMESVLHN. A helical membrane pass occupies residues 10 to 30; that stretch reads FATVLIYVEFIFGNLSNGFIV. The Cytoplasmic segment spans residues 31–47; it reads LSNFLDWVIKQKLSLID. The helical transmembrane segment at 48-68 threads the bilayer; sequence KILLTLAISRITLIWEIYAWF. Topologically, residues 69–85 are extracellular; the sequence is KSLYDPSSFLIGIEFQI. The chain crosses the membrane as a helical span at residues 86–108; it reads IYFSWVLSSHFSLWLATTLSVFY. Topologically, residues 109-129 are cytoplasmic; sequence LLRIANCSWQIFLYLKWRLKQ. Residues 130 to 150 form a helical membrane-spanning segment; sequence LIVGMLLGSLVFLLGNLMQSM. Residues 151–181 are Extracellular-facing; sequence LEERFYQYGRNTSVNTMSNDLAMWTELIFFN. N161 carries an N-linked (GlcNAc...) asparagine glycan. A helical membrane pass occupies residues 182-202; the sequence is MAMFSVIPFTLALISFLLLIF. Over 203–231 the chain is Cytoplasmic; it reads SLWKHLQKMQLISRRHRDPSTKAHMNALR. A helical membrane pass occupies residues 232–252; it reads IMVSFLLLYTMHFLSLLISWI. The Extracellular portion of the chain corresponds to 253–262; that stretch reads AQKHQSELAD. Residues 263–283 form a helical membrane-spanning segment; sequence IIGMITELMYPSVHSCILILG. Residues 284–329 are Cytoplasmic-facing; sequence NSKLKQTSLCMLRHLRCRLKGENITIAYSNQITSFCVFCVANKSMR.

This sequence belongs to the G-protein coupled receptor T2R family.

It is found in the membrane. Putative taste receptor which may play a role in the perception of bitterness. The sequence is that of Taste receptor type 2 member 102 from Mus musculus (Mouse).